The following is a 760-amino-acid chain: U-box domain-containing protein 3 (760 aa).

Positions 146-217 (LMELMENALR…EQTEQLIELV (72 aa)) form a coiled coil. The U-box domain maps to 237–311 (SIPPYFRCPL…ASWLEANRIN (75 aa)). The span at 424-434 (ILGNHQSSSEM) shows a compositional bias: polar residues. Residues 424–448 (ILGNHQSSSEMSPKKNLESSNNVNH) are disordered. ARM repeat units lie at residues 504–543 (IENR…NLSI), 545–584 (ELNK…SLSV), 586–626 (QVNR…NLSI), 628–666 (HDNK…NLSA), and 668–707 (GEGR…QLCL).

The enzyme catalyses S-ubiquitinyl-[E2 ubiquitin-conjugating enzyme]-L-cysteine + [acceptor protein]-L-lysine = [E2 ubiquitin-conjugating enzyme]-L-cysteine + N(6)-ubiquitinyl-[acceptor protein]-L-lysine.. It functions in the pathway protein modification; protein ubiquitination. Functionally, functions as an E3 ubiquitin ligase. This is U-box domain-containing protein 3 (PUB3) from Arabidopsis thaliana (Mouse-ear cress).